The following is a 676-amino-acid chain: Envelope glycoprotein (676 aa).

A signal peptide spans 1 to 32; it reads MGASGILQLPRERFRKTSFFVWVIILFHKVFS. Over 33–650 the chain is Extracellular; sequence IPLGVVHNNT…GSNWWTGWKQ (618 aa). A glycan (N-linked (GlcNAc...) asparagine; by host) is linked at Asn40. 5 disulfide bridges follow: Cys53–Cys609, Cys108–Cys135, Cys121–Cys147, Cys511–Cys556, and Cys601–Cys608. Residues 54–201 are receptor-binding; that stretch reads RDKLSSTSQL…DFFQSPPLHE (148 aa). 5 N-linked (GlcNAc...) asparagine; by host glycosylation sites follow: Asn204, Asn228, Asn257, Asn268, and Asn296. The mucin-like region stretch occupies residues 305 to 485; sequence ELSFVPVPET…LSGPGFLTNT (181 aa). The interval 356–463 is disordered; that stretch reads IKGKDTMPTT…PTTLPEQHTA (108 aa). A compositionally biased stretch (low complexity) spans 361 to 374; the sequence is TMPTTVTGVPTTTP. A compositionally biased stretch (polar residues) spans 402–422; it reads TTQPAKTTSQPTNSTESTTLN. A glycan (N-linked (GlcNAc...) asparagine; by host) is linked at Asn414. Residues 423-440 are compositionally biased toward low complexity; it reads PTSEPSSRGTGPSSPTVP. Residue Asn441 is glycosylated (N-linked (GlcNAc...) asparagine; by host). The segment covering 452–463 has biased composition (polar residues); the sequence is TTPTTLPEQHTA. The segment at 524–539 is fusion peptide; the sequence is GAAIGLAWIPYFGPAA. Residues 554-595 are a coiled coil; it reads LICGLRQLANETTQALQLFLRATTELRTFSILNRKAIDFLLQ. N-linked (GlcNAc...) asparagine; by host glycosylation occurs at Asn563. Positions 615-634 form a coiled coil; that stretch reads WTKNITDKIDQIIHDFVDNN. The N-linked (GlcNAc...) asparagine; by host glycan is linked to Asn618. Residues 651–671 form a helical membrane-spanning segment; that stretch reads WVPAGIGITGVIIAIIALLCI. S-palmitoyl cysteine; by host attachment occurs at residues Cys670 and Cys672. Topologically, residues 672 to 676 are cytoplasmic; that stretch reads CKFML.

Belongs to the filoviruses glycoprotein family. In terms of assembly, homotrimer; each monomer consists of a GP1 and a GP2 subunit linked by disulfide bonds. The resulting peplomers (GP1,2) protrude from the virus surface as spikes. GP1 and GP2delta are part of GP1,2delta soluble complexes released by ectodomain shedding. GP1,2 interacts with host integrin ITGAV/alpha-V and CLEC10A. Also binds human CD209 and CLEC4M (collectively referred to as DC-SIGN(R)), as well as human FOLR1. Interacts with host entry receptor NPC1. The signal peptide region modulates GP's high mannose glycosylation, thereby determining the efficiency of the interactions with DC-SIGN(R). Post-translationally, N-glycosylated. In terms of processing, O-glycosylated in the mucin-like region. Palmitoylation of GP2 is not required for its function. Post-translationally, specific enzymatic cleavages in vivo yield mature proteins. The precursor is processed into GP1 and GP2 by host cell furin in the trans Golgi, and maybe by other host proteases, to yield the mature GP1 and GP2 proteins. The cleavage site corresponds to the furin optimal cleavage sequence [KR]-X-[KR]-R. This cleavage does not seem to be required for function. After the internalization of the virus into cell endosomes, GP1 C-terminus is removed by the endosomal proteases cathepsin B, cathepsin L, or both, leaving a 19-kDa N-terminal fragment which is further digested by cathepsin B. Proteolytic processing of GP1,2 by host ADAM17 can remove the transmembrane anchor of GP2 and leads to shedding of complexes consisting in GP1 and truncated GP2 (GP1,2delta).

It is found in the virion membrane. The protein localises to the host cell membrane. It localises to the secreted. Its function is as follows. GP1 is responsible for binding to the receptor(s) on target cells. Interacts with CD209/DC-SIGN and CLEC4M/DC-SIGNR which act as cofactors for virus entry into the host cell. Binding to CD209 and CLEC4M, which are respectively found on dendritic cells (DCs), and on endothelial cells of liver sinusoids and lymph node sinuses, facilitate infection of macrophages and endothelial cells. These interactions not only facilitate virus cell entry, but also allow capture of viral particles by DCs and subsequent transmission to susceptible cells without DCs infection (trans infection). Binding to the macrophage specific lectin CLEC10A also seems to enhance virus infectivity. Interaction with FOLR1/folate receptor alpha may be a cofactor for virus entry in some cell types, although results are contradictory. Members of the Tyro3 receptor tyrosine kinase family also seem to be cell entry factors in filovirus infection. Once attached, the virions are internalized through clathrin-dependent endocytosis and/or macropinocytosis. After internalization of the virus into the endosomes of the host cell, proteolysis of GP1 by two cysteine proteases, CTSB/cathepsin B and CTSL/cathepsin L presumably induces a conformational change of GP2, unmasking its fusion peptide and initiating membranes fusion. GP2 acts as a class I viral fusion protein. Under the current model, the protein has at least 3 conformational states: pre-fusion native state, pre-hairpin intermediate state, and post-fusion hairpin state. During viral and target cell membrane fusion, the coiled coil regions (heptad repeats) assume a trimer-of-hairpins structure, positioning the fusion peptide in close proximity to the C-terminal region of the ectodomain. The formation of this structure appears to drive apposition and subsequent fusion of viral and target cell membranes. Responsible for penetration of the virus into the cell cytoplasm by mediating the fusion of the membrane of the endocytosed virus particle with the endosomal membrane. Low pH in endosomes induces an irreversible conformational change in GP2, releasing the fusion hydrophobic peptide. Functionally, GP1,2 which is the disulfid-linked complex of GP1 and GP2, mediates endothelial cell activation and decreases endothelial barrier function. Mediates activation of primary macrophages. At terminal stages of the viral infection, when its expression is high, GP1,2 down-modulates the expression of various host cell surface molecules that are essential for immune surveillance and cell adhesion. Down-modulates integrins ITGA1, ITGA2, ITGA3, ITGA4, ITGA5, ITGA6, ITGAV and ITGB1. GP1,2 alters the cellular recycling of the dimer alpha-V/beta-3 via a dynamin-dependent pathway. Decrease in the host cell surface expression of various adhesion molecules may lead to cell detachment, contributing to the disruption of blood vessel integrity and hemorrhages developed during Ebola virus infection (cytotoxicity). This cytotoxicity appears late in the infection, only after the massive release of viral particles by infected cells. Down-modulation of host MHC-I, leading to altered recognition by immune cells, may explain the immune suppression and inflammatory dysfunction linked to Ebola infection. Also down-modulates EGFR surface expression. Counteracts the antiviral effect of host tetherin. In terms of biological role, GP2delta is part of the complex GP1,2delta released by host ADAM17 metalloprotease. This secreted complex may play a role in the pathogenesis of the virus by efficiently blocking the neutralizing antibodies that would otherwise neutralize the virus surface glycoproteins GP1,2. Might therefore contribute to the lack of inflammatory reaction seen during infection in spite the of extensive necrosis and massive virus production. GP1,2delta does not seem to be involved in activation of primary macrophages. This Tai Forest ebolavirus (strain Cote d'Ivoire-94) (TAFV) protein is Envelope glycoprotein (GP).